We begin with the raw amino-acid sequence, 91 residues long: MVKIRLARGGAKKKPFYLIVATDSRKRRDSGYYIERLGYFNPVAHGQEVRLTIEKDRFAYWTSKGAQISDRVKQLVKEFKDPSIYEKRVAT.

Belongs to the bacterial ribosomal protein bS16 family.

The polypeptide is Small ribosomal subunit protein bS16 (Ruthia magnifica subsp. Calyptogena magnifica).